A 930-amino-acid chain; its full sequence is MDFTHFDDFAFAYYGLPDQASLASLVDHTHMFQSPTAFPQHQAMSGLAHSGLPLGTLPTGNRSQSMEGSKAPPDRTSPASNALEDPTTDEFGLASRNRVGGIDLGGKPKEDKADATPAWSGLKTKAGKERKRLPLACIPCRRKKIRCSGEKPACEHCLRSYIPCVYKITTRKAAPRTDYMAMLDKRPKCMEERVIKAIPKSDQEVASSVTRPVVKPAIPGTVPSSKPTKKRSAEEAFGPDLEACAKAPSEPKIEGDNGPSNLQVQEGEENKLQHEGTEALPSKDIQEHLADVFFDNIYGQSYHLLHKPSYMRKLKNGTLPPVLVLTVCAVAARFTSNPLVSSSGPEFLRGEEWASHARDICTKRYEWPNLTILTCLLILGLHEFGTCQGGRSWALGGQAIRMAFALQLHKDLEYDPSGRNGTKTQLSFIDREIRRRIMWACFLMDRFNSSGTDRPMFIREDTIQIPLPVKEKYFQFGMPAPTEMLDGRVPHPPSPNDGQIADVRENMGVAAFLIRAIALWGRITTCLSQGCKDLDSNPLWEGKSHYMNHLNDAVNLEASLPLSLKYSAENLEVHKTENTPSQFLFMHICLQHNILLVSRAAMSARKQHGVHDDFFSEASKRTFNAANRISELLREAEQSGCFVSAPFAGYCAFSSTTVHILAIISRNPSMKLTAEANLTTNVKYLHKMKKYWGMFHWMVENVRTQYRNVLDAMRAGANVEERATQLSFLQYGDWFNRYPRGLSDAEFMDPATHKRKDSGADGVLDAKPELRSVEKYFTLPTPRRVENKDTIRAAAPKRKQSAKKQTGMPAQPGQHLDSLQSIDADAVSQEHKFSGGLGLQITGAAGFNPLAASNQQNPDFSTTMSPTSPANMTAFAHYAHTPTFFPPELLAMNFGQDSNGNIDPLDRQLIYGGYSMDASTGLGHGHTWSL.

Positions 137–164 (CIPCRRKKIRCSGEKPACEHCLRSYIPC) form a DNA-binding region, zn(2)-C6 fungal-type.

The protein resides in the nucleus. Zn(2)-C6 fungal-type transcription factor that has a role in the establishment of the fungus within the plant and/or the progress of the disease. Regulates the expression of virulence factors such as SIX1 and SIX6. The chain is Zn(2)-C6 fungal-type transcription factor FTF1c from Fusarium oxysporum f. sp. lycopersici (strain 4287 / CBS 123668 / FGSC 9935 / NRRL 34936) (Fusarium vascular wilt of tomato).